A 413-amino-acid chain; its full sequence is Monacolin J acid methylbutanoyltransferase (413 aa).

Arg-73 serves as a coordination point for monacolin J. Ser-76 acts as the Acyl-ester intermediate in catalysis. Arg-173, Tyr-188, and Tyr-258 together coordinate monacolin J. Gly-366 is a 2-methylbutanoate binding site. Monacolin J-binding residues include Glu-388 and Trp-390.

It belongs to the class-A beta-lactamase family. In terms of assembly, interacts with LovF.

It catalyses the reaction monacolin J carboxylate + (S)-2-methylbutanoyl-[2-methylbutanoate polyketide synthase] = lovastatin carboxylate + holo-[2-methylbutanoate polyketide synthase]. The protein operates within polyketide biosynthesis; lovastatin biosynthesis. Functionally, monacolin J acid methylbutanoyltransferase; part of the gene cluster that mediates the biosynthesis of lovastatin (also known as mevinolin, mevacor or monacolin K), a hypolipidemic inhibitor of (3S)-hydroxymethylglutaryl-coenzyme A (HMG-CoA) reductase (HMGR). The first step in the biosynthesis of lovastatin is the production of dihydromonacolin L acid by the lovastatin nonaketide synthase lovB and the trans-acting enoyl reductase lovC via condensation of one acetyl-CoA unit and 8 malonyl-CoA units. Dihydromonacolin L acid is released from lovB by the thioesterase lovG. Next, dihydromonacolin L acid is oxidized by the dihydromonacolin L monooxygenase lovA twice to form monacolin J acid. The 2-methylbutyrate moiety of lovastatin is synthesized by the lovastatin diketide synthase lovF via condensation of one acetyl-CoA unit and one malonyl-CoA unit. Finally, the covalent attachment of this moiety to monacolin J acid is catalyzed by the transesterase lovD to yield lovastatin. LovD has broad substrate specificity and can also convert monacolin J to simvastatin using alpha-dimethylbutanoyl-S-methyl-3-mercaptopropionate (DMB-S-MMP) as the thioester acyl donor, and can also catalyze the reverse reaction and function as hydrolase in vitro. LovD has much higher activity with LovF-bound 2-methylbutanoate than with free diketide substrates. This is Monacolin J acid methylbutanoyltransferase from Aspergillus terreus.